A 1705-amino-acid polypeptide reads, in one-letter code: Rho guanine nucleotide exchange factor 28 (1705 aa).

2 disordered regions span residues 287 to 316 and 473 to 524; these read RPEE…SAAE and KKRS…ETNT. Residues serine 313 and serine 478 each carry the phosphoserine modification. The span at 501 to 510 shows a compositional bias: polar residues; it reads PGSQSSSRTG. Serine 624 carries the post-translational modification Phosphoserine. The segment at 630-649 is disordered; the sequence is MTSPRNKSKTKSKDAKDKEK. The span at 640–649 shows a compositional bias: basic and acidic residues; it reads KSKDAKDKEK. Residues 652-699 form a Phorbol-ester/DAG-type zinc finger; the sequence is RHQFAPGTFSGVLQCLVCDKTLLGKESLQCSNCNANVHKGCKDAAPAC. Composition is skewed to polar residues over residues 710-721 and 759-775; these read NKPQTILGNSSF and VPGT…TSLE. Residues 710–800 are disordered; that stretch reads NKPQTILGNS…ELLQSMGSSP (91 aa). Residues 777-791 show a composition bias toward basic and acidic residues; it reads ESDHNSCRSRSHSDE. The region spanning 849 to 1044 is the DH domain; that stretch reads KRQDVIFELM…KDMIATVDLK (196 aa). The region spanning 1086–1188 is the PH domain; that stretch reads TLLYDGLVYW…WMRRIQQAVE (103 aa). The disordered stretch occupies residues 1187 to 1207; sequence VESCPEEKGGRTSESDEDKRK. Positions 1191–1207 are enriched in basic and acidic residues; it reads PEEKGGRTSESDEDKRK. An interaction with PTK2/FAK1; required for regulation of axonal branching and synapse formation region spans residues 1295-1304; it reads AVSQSCEDSC. Residues 1312-1339 are disordered; it reads TLSSHDVPGSPTASLVTGGREGRGCSDV. A mediates cytoplasmic retention and interaction with YWHAH region spans residues 1372–1383; sequence IIQAIQNLTRLL. The interaction with microtubules stretch occupies residues 1425–1705; that stretch reads QKSRDADRQH…DGAKENIVYL (281 aa). Residues 1488–1525 are a coiled coil; it reads RSRGELDLQLQEYQHSLERLREGQRLVEREQARMRAQQ. The tract at residues 1496-1527 is RNA-binding; it reads QLQEYQHSLERLREGQRLVEREQARMRAQQSL. Phosphoserine is present on serine 1538. A mediates cytoplasmic retention and interaction with MAPK8IP1 region spans residues 1566–1579; sequence FINEALVQMSFNTF. Residues 1638–1705 are disordered; sequence PFHESSKDSC…DGAKENIVYL (68 aa). Over residues 1641 to 1655 the composition is skewed to basic and acidic residues; that stretch reads ESSKDSCKNDLDTSH. The segment covering 1656-1669 has biased composition (polar residues); the sequence is TESPTPHDSNSHRP. A compositionally biased stretch (basic and acidic residues) spans 1688–1699; that stretch reads TRQDGETGDGAK.

In terms of assembly, homooligomer; forms cytoplasmic aggregates. Forms a complex with MAPK8 and MAPK8IP1. Interacts with RHOA. Interacts with microtubules. Interacts with YWHAE and YWHAH. Interacts with PTK2/FAK1. Interacts with NEFL. Interacts with CTNND2; prevents interaction with RHOA. Post-translationally, phosphorylated on tyrosine upon stimulation of cells by laminin.

It localises to the cytoplasm. The protein localises to the cell membrane. Functions as a RHOA-specific guanine nucleotide exchange factor regulating signaling pathways downstream of integrins and growth factor receptors. Functions in axonal branching, synapse formation and dendritic morphogenesis. Also functions in focal adhesion formation, cell motility and B-lymphocytes activation. May regulate NEFL expression and aggregation and play a role in apoptosis. The sequence is that of Rho guanine nucleotide exchange factor 28 (ARHGEF28) from Homo sapiens (Human).